The chain runs to 225 residues: MSRTSSAPLLVLSAALAVLASTCIADPEPVQDFCVAVVPRAGDAAAAACPAYPGFPCKPASTVVSDDFFFAGLAVASDTDNRFGFNVTAANAETFPGLNTLGVSIGRVDLAPGGVNPLHSHPRATELIHVVAGRVLAGFVSTAGEFYSKVLGEGETFVVPRGMIHFQYNVGGVAAQVITAFNSQMPGVVAAGSTLFGSDPEIPDAVLAKSFQVDAKIIKLLKSKF.

A signal peptide spans Met-1–Ala-25. A disulfide bridge links Cys-34 with Cys-57. In terms of domain architecture, Cupin type-1 spans Ala-71–Lys-219. Asn-86 carries an N-linked (GlcNAc...) asparagine glycan. Mn(2+) contacts are provided by His-119, His-121, Glu-126, and His-165.

It belongs to the germin family. In terms of assembly, oligomer (believed to be a pentamer but probably hexamer).

The protein localises to the secreted. It localises to the extracellular space. It is found in the apoplast. May play a role in plant defense. Probably has no oxalate oxidase activity even if the active site is conserved. This chain is Germin-like protein 3-8, found in Oryza sativa subsp. japonica (Rice).